The following is a 134-amino-acid chain: Terepressin/terephysin (134 aa).

The first 33 residues, 1-33, serve as a signal peptide directing secretion; the sequence is MKCSVLPRSRLSWTMCVLLLPLLMLMLEGGVQG. C34 and C39 are joined by a disulfide. The propeptide occupies 44-50; the sequence is KRAVDSV. Disulfide bonds link C56/C100, C59/C73, C67/C90, C74/C80, C107/C121, C115/C133, and C122/C127.

Belongs to the vasopressin/oxytocin family. Post-translationally, contains 7 disulfide bonds. Expressed by the venom duct.

It localises to the secreted. In Terebra subulata (Chocolate spotted auger), this protein is Terepressin/terephysin.